The sequence spans 113 residues: Putative pterin-4-alpha-carbinolamine dehydratase (113 aa).

The protein belongs to the pterin-4-alpha-carbinolamine dehydratase family.

The catalysed reaction is (4aS,6R)-4a-hydroxy-L-erythro-5,6,7,8-tetrahydrobiopterin = (6R)-L-erythro-6,7-dihydrobiopterin + H2O. The protein is Putative pterin-4-alpha-carbinolamine dehydratase of Chlorobium limicola (strain DSM 245 / NBRC 103803 / 6330).